We begin with the raw amino-acid sequence, 272 residues long: Ethanolamine ammonia-lyase small subunit (272 aa).

The adenosylcob(III)alamin site is built by Val161, Glu182, and Cys211.

Belongs to the EutC family. As to quaternary structure, the basic unit is a heterodimer which dimerizes to form tetramers. The heterotetramers trimerize; 6 large subunits form a core ring with 6 small subunits projecting outwards. Adenosylcob(III)alamin serves as cofactor.

The protein localises to the bacterial microcompartment. It catalyses the reaction ethanolamine = acetaldehyde + NH4(+). The protein operates within amine and polyamine degradation; ethanolamine degradation. Its function is as follows. Catalyzes the deamination of various vicinal amino-alcohols to oxo compounds. Allows this organism to utilize ethanolamine as the sole source of nitrogen and carbon in the presence of external vitamin B12. The sequence is that of Ethanolamine ammonia-lyase small subunit from Pseudomonas putida (strain ATCC 47054 / DSM 6125 / CFBP 8728 / NCIMB 11950 / KT2440).